Here is a 436-residue protein sequence, read N- to C-terminus: O-phosphoseryl-tRNA(Sec) selenium transferase (436 aa).

A tetramerization region spans residues 1 to 44; it reads MLDFNIEGLIPKNMEKRGELVLNEYLKEIEDVFNHRKIPENGID. Arg72 serves as a coordination point for pyridoxal 5'-phosphate. The segment at 93–103 is phosphate loop (P-loop); it reads GRSGNLVDPQP. Substrate is bound by residues Arg94, Ser95, and Gln102. An N6-(pyridoxal phosphate)lysine modification is found at Lys278. Arg307 provides a ligand contact to substrate.

This sequence belongs to the SepSecS family. Homotetramer. The cofactor is pyridoxal 5'-phosphate.

It catalyses the reaction O-phospho-L-seryl-tRNA(Sec) + selenophosphate + H2O = L-selenocysteinyl-tRNA(Sec) + 2 phosphate. It participates in aminoacyl-tRNA biosynthesis; selenocysteinyl-tRNA(Sec) biosynthesis; selenocysteinyl-tRNA(Sec) from L-seryl-tRNA(Sec) (archaeal/eukaryal route): step 2/2. Functionally, converts O-phosphoseryl-tRNA(Sec) to selenocysteinyl-tRNA(Sec) required for selenoprotein biosynthesis. The sequence is that of O-phosphoseryl-tRNA(Sec) selenium transferase (spcS) from Methanococcus maripaludis (strain DSM 14266 / JCM 13030 / NBRC 101832 / S2 / LL).